Consider the following 103-residue polypeptide: Co-chaperonin GroES (103 aa).

Belongs to the GroES chaperonin family. Heptamer of 7 subunits arranged in a ring. Interacts with the chaperonin GroEL.

The protein localises to the cytoplasm. In terms of biological role, together with the chaperonin GroEL, plays an essential role in assisting protein folding. The GroEL-GroES system forms a nano-cage that allows encapsulation of the non-native substrate proteins and provides a physical environment optimized to promote and accelerate protein folding. GroES binds to the apical surface of the GroEL ring, thereby capping the opening of the GroEL channel. This chain is Co-chaperonin GroES, found in Thermosynechococcus vestitus (strain NIES-2133 / IAM M-273 / BP-1).